A 566-amino-acid chain; its full sequence is Arginine--tRNA ligase (566 aa).

The short motif at 121-131 (ANPNGPFHIGH) is the 'HIGH' region element.

This sequence belongs to the class-I aminoacyl-tRNA synthetase family.

It is found in the cytoplasm. It catalyses the reaction tRNA(Arg) + L-arginine + ATP = L-arginyl-tRNA(Arg) + AMP + diphosphate. The polypeptide is Arginine--tRNA ligase (Methanococcus maripaludis (strain DSM 14266 / JCM 13030 / NBRC 101832 / S2 / LL)).